Here is a 932-residue protein sequence, read N- to C-terminus: Isoleucine--tRNA ligase (932 aa).

The 'HIGH' region motif lies at 58 to 68 (PYANGNLHLGH). Glutamate 567 provides a ligand contact to L-isoleucyl-5'-AMP. Positions 608 to 612 (KMSKS) match the 'KMSKS' region motif. Lysine 611 contributes to the ATP binding site. Zn(2+)-binding residues include cysteine 895, cysteine 898, cysteine 915, and cysteine 918.

Belongs to the class-I aminoacyl-tRNA synthetase family. IleS type 1 subfamily. As to quaternary structure, monomer. Requires Zn(2+) as cofactor.

Its subcellular location is the cytoplasm. The catalysed reaction is tRNA(Ile) + L-isoleucine + ATP = L-isoleucyl-tRNA(Ile) + AMP + diphosphate. In terms of biological role, catalyzes the attachment of isoleucine to tRNA(Ile). As IleRS can inadvertently accommodate and process structurally similar amino acids such as valine, to avoid such errors it has two additional distinct tRNA(Ile)-dependent editing activities. One activity is designated as 'pretransfer' editing and involves the hydrolysis of activated Val-AMP. The other activity is designated 'posttransfer' editing and involves deacylation of mischarged Val-tRNA(Ile). The sequence is that of Isoleucine--tRNA ligase from Azoarcus sp. (strain BH72).